The primary structure comprises 220 residues: Serine protease-like protein 51 (220 aa).

The N-terminal stretch at 1–16 (MFQLLIPLLLALKGHA) is a signal peptide. The 198-residue stretch at 23-220 (VQCGHRPAFP…SSKWVSSVGA (198 aa)) folds into the Peptidase S1 domain. Asn-33 carries N-linked (GlcNAc...) asparagine glycosylation. An intrachain disulfide couples Cys-64 to Cys-80. N-linked (GlcNAc...) asparagine glycosylation occurs at Asn-92. The cysteines at positions 157 and 170 are disulfide-linked.

Belongs to the peptidase S1 family.

It localises to the secreted. In Homo sapiens (Human), this protein is Serine protease-like protein 51.